Here is a 73-residue protein sequence, read N- to C-terminus: Translation initiation factor IF-1 (73 aa).

The S1-like domain occupies 1–73; it reads MSKKKDVIEM…TRGRITYRYK (73 aa).

It belongs to the IF-1 family. As to quaternary structure, component of the 30S ribosomal translation pre-initiation complex which assembles on the 30S ribosome in the order IF-2 and IF-3, IF-1 and N-formylmethionyl-tRNA(fMet); mRNA recruitment can occur at any time during PIC assembly.

It localises to the cytoplasm. Functionally, one of the essential components for the initiation of protein synthesis. Stabilizes the binding of IF-2 and IF-3 on the 30S subunit to which N-formylmethionyl-tRNA(fMet) subsequently binds. Helps modulate mRNA selection, yielding the 30S pre-initiation complex (PIC). Upon addition of the 50S ribosomal subunit IF-1, IF-2 and IF-3 are released leaving the mature 70S translation initiation complex. This chain is Translation initiation factor IF-1, found in Chloroflexus aurantiacus (strain ATCC 29366 / DSM 635 / J-10-fl).